A 331-amino-acid polypeptide reads, in one-letter code: Probable cytosolic iron-sulfur protein assembly protein Ciao1 (331 aa).

WD repeat units follow at residues 12–51 (GHKG…WTTK), 57–96 (GHKR…ATLE), 97–136 (GHEN…EFEC), 142–181 (AHTQ…SDWD), 188–227 (SHTS…NEAG), 246–285 (QHSR…KRDE), and 297–331 (AHEQ…KLQE).

It belongs to the WD repeat CIA1 family.

Essential component of the cytosolic iron-sulfur (Fe/S) protein assembly machinery. Required for the maturation of extramitochondrial Fe/S proteins. The sequence is that of Probable cytosolic iron-sulfur protein assembly protein Ciao1 from Drosophila grimshawi (Hawaiian fruit fly).